The sequence spans 441 residues: Alpha-methylserine aldolase (441 aa).

Residue lysine 256 is modified to N6-(pyridoxal phosphate)lysine.

Belongs to the SHMT family. Alpha-methylserine aldolase subfamily. In terms of assembly, homodimer. It depends on pyridoxal 5'-phosphate as a cofactor.

The enzyme catalyses 2-methyl-L-serine = formaldehyde + L-alanine. Catalyzes the reversible interconversion of alpha-methyl-L-serine to L-alanine and formaldehyde. This is Alpha-methylserine aldolase from Variovorax paradoxus.